Reading from the N-terminus, the 298-residue chain is 4-hydroxy-3-methylbut-2-enyl diphosphate reductase (298 aa).

A [4Fe-4S] cluster-binding site is contributed by C12. Residues H40 and H78 each coordinate (2E)-4-hydroxy-3-methylbut-2-enyl diphosphate. Residues H40 and H78 each contribute to the dimethylallyl diphosphate site. Isopentenyl diphosphate contacts are provided by H40 and H78. C100 contributes to the [4Fe-4S] cluster binding site. H128 contacts (2E)-4-hydroxy-3-methylbut-2-enyl diphosphate. H128 provides a ligand contact to dimethylallyl diphosphate. H128 lines the isopentenyl diphosphate pocket. The active-site Proton donor is the E130. (2E)-4-hydroxy-3-methylbut-2-enyl diphosphate is bound at residue T171. Residue C200 participates in [4Fe-4S] cluster binding. (2E)-4-hydroxy-3-methylbut-2-enyl diphosphate contacts are provided by S228, S229, N230, and S270. S228, S229, N230, and S270 together coordinate dimethylallyl diphosphate. Positions 228, 229, 230, and 270 each coordinate isopentenyl diphosphate.

This sequence belongs to the IspH family. [4Fe-4S] cluster is required as a cofactor.

It carries out the reaction isopentenyl diphosphate + 2 oxidized [2Fe-2S]-[ferredoxin] + H2O = (2E)-4-hydroxy-3-methylbut-2-enyl diphosphate + 2 reduced [2Fe-2S]-[ferredoxin] + 2 H(+). The catalysed reaction is dimethylallyl diphosphate + 2 oxidized [2Fe-2S]-[ferredoxin] + H2O = (2E)-4-hydroxy-3-methylbut-2-enyl diphosphate + 2 reduced [2Fe-2S]-[ferredoxin] + 2 H(+). It functions in the pathway isoprenoid biosynthesis; dimethylallyl diphosphate biosynthesis; dimethylallyl diphosphate from (2E)-4-hydroxy-3-methylbutenyl diphosphate: step 1/1. Its pathway is isoprenoid biosynthesis; isopentenyl diphosphate biosynthesis via DXP pathway; isopentenyl diphosphate from 1-deoxy-D-xylulose 5-phosphate: step 6/6. Functionally, catalyzes the conversion of 1-hydroxy-2-methyl-2-(E)-butenyl 4-diphosphate (HMBPP) into a mixture of isopentenyl diphosphate (IPP) and dimethylallyl diphosphate (DMAPP). Acts in the terminal step of the DOXP/MEP pathway for isoprenoid precursor biosynthesis. The chain is 4-hydroxy-3-methylbut-2-enyl diphosphate reductase from Kosmotoga olearia (strain ATCC BAA-1733 / DSM 21960 / TBF 19.5.1).